Consider the following 525-residue polypeptide: Lymphocyte activation gene 3 protein (525 aa).

Positions 1 to 22 (MWEAQFLGLLFLQPLWVAPVKP) are cleaved as a signal peptide. At 23 to 450 (LQPGAEVPVV…APGALPAGHL (428 aa)) the chain is on the extracellular side. The region spanning 37–167 (GAPAQLPCSP…LSCRLRLRLG (131 aa)) is the Ig-like V-type domain. Residues 37 to 252 (GAPAQLPCSP…LTYRDGFNVS (216 aa)) form an interaction with FGL1 region. Cys44 and Cys160 form a disulfide bridge. Positions 62 to 97 (TWQHQPDSGPPAAAPGHPLAPGPHPAAPSSWGPRPR) are disordered. Pro residues predominate over residues 69-87 (SGPPAAAPGHPLAPGPHPA). The 85-residue stretch at 168-252 (QASMTASPPG…LTYRDGFNVS (85 aa)) folds into the Ig-like C2-type 1 domain. Residue Asn188 is glycosylated (N-linked (GlcNAc...) asparagine). A disulfide bridge connects residues Cys189 and Cys241. 2 N-linked (GlcNAc...) asparagine glycosylation sites follow: Asn250 and Asn256. 2 consecutive Ig-like C2-type domains span residues 265–343 (PTPL…QQLN) and 348–419 (LAII…QGER). Cys282 and Cys333 form a disulfide bridge. Asn343 is a glycosylation site (N-linked (GlcNAc...) asparagine). Residues Cys369 and Cys412 are joined by a disulfide bond. Residues 429-450 (ELSSPGAQRSGRAPGALPAGHL) form a connecting peptide region. Residues 451 to 471 (LLFLILGVLSLLLLVTGAFGF) traverse the membrane as a helical segment. At 472–525 (HLWRRQWRPRRFSALEQGIHPPQAQSKIEELEQEPEPEPEPEPEPEPEPEPEQL) the chain is on the cytoplasmic side. Residues 487-525 (EQGIHPPQAQSKIEELEQEPEPEPEPEPEPEPEPEPEQL) are disordered. The KIEELE motif signature appears at 498-503 (KIEELE). The tract at residues 501 to 524 (ELEQEPEPEPEPEPEPEPEPEPEQ) is 12 X 2 AA tandem repeats of E-X. The segment covering 502–525 (LEQEPEPEPEPEPEPEPEPEPEQL) has biased composition (acidic residues).

Belongs to the LAG3 family. Interacts with MHC class II (MHC-II); selectively recognizes stable complexes of peptide and MHC-II. Interacts with FGL1 (via the Fibrinogen C-terminal domain). Proteolytically cleaved by ADAM10 and ADAM17 within the connecting peptide region, leading to release of Secreted lymphocyte activation gene 3 protein (sLAG-3). ADAM10 mediates constitutive cleavage, but cleavage increases following T-cell activation, whereas shedding by ADAM17 is induced by TCR signaling in a PRKCQ-dependent manner. As to expression, primarily expressed in activated T-cells and a subset of natural killer (NK) cells.

The protein resides in the cell membrane. Its subcellular location is the secreted. Lymphocyte activation gene 3 protein: Inhibitory receptor on antigen activated T-cells. Delivers inhibitory signals upon binding to ligands, such as FGL1. FGL1 constitutes a major ligand of LAG3 and is responsible for LAG3 T-cell inhibitory function. Following TCR engagement, LAG3 associates with CD3-TCR in the immunological synapse and directly inhibits T-cell activation. May inhibit antigen-specific T-cell activation in synergy with PDCD1/PD-1, possibly by acting as a coreceptor for PDCD1/PD-1. Negatively regulates the proliferation, activation, effector function and homeostasis of both CD8(+) and CD4(+) T-cells. Also mediates immune tolerance: constitutively expressed on a subset of regulatory T-cells (Tregs) and contributes to their suppressive function. Also acts as a negative regulator of plasmacytoid dendritic cell (pDCs) activation. Binds MHC class II (MHC-II); the precise role of MHC-II-binding is however unclear. In terms of biological role, may function as a ligand for MHC class II (MHC-II) on antigen-presenting cells (APC), promoting APC activation/maturation and driving Th1 immune response. In Homo sapiens (Human), this protein is Lymphocyte activation gene 3 protein.